A 338-amino-acid polypeptide reads, in one-letter code: UbiA prenyltransferase domain-containing protein 1 (338 aa).

Residues 1–39 (MAAVQAPGEKINIQAGETTQVGDTDQQRNDWPEEDRLPE) form a disordered region. Ala-2 carries the post-translational modification N-acetylalanine. The span at 15 to 24 (AGETTQVGDT) shows a compositional bias: polar residues. The segment covering 25–39 (DQQRNDWPEEDRLPE) has biased composition (basic and acidic residues). Helical transmembrane passes span 83–103 (LLLGCAVAVLAVHGAGNLVNT), 134–154 (FGVFLYTLGCVCAAYLYYLST), 160–180 (LALIYFGGLSGSFLYTGGIGF), 188–208 (LVILITFGPLAVMFAYAVQVG), 209–229 (SLAIFPLVYAIPLALSTEAIL), 245–267 (IVTLAILIGPTLSYILYNTLLFL), 277–297 (THCSISLALPLLTSPMAFSLE), and 315–335 (LNLLLGLFYVFGIILAPAGSL).

Belongs to the UbiA prenyltransferase family. As to quaternary structure, interacts with HMGCR and SOAT1.

The protein localises to the endoplasmic reticulum membrane. Its subcellular location is the golgi apparatus membrane. The protein resides in the mitochondrion membrane. The catalysed reaction is menadiol + (2E,6E,10E)-geranylgeranyl diphosphate = menaquinol-4 + diphosphate. The enzyme catalyses all-trans-decaprenyl diphosphate + 4-hydroxybenzoate = 4-hydroxy-3-(all-trans-decaprenyl)benzoate + diphosphate. It functions in the pathway quinol/quinone metabolism; menaquinone biosynthesis. It participates in cofactor biosynthesis; ubiquinone biosynthesis. Functionally, prenyltransferase that mediates the formation of menaquinone-4 (MK-4) and coenzyme Q10. MK-4 is a vitamin K2 isoform required for endothelial cell development. Mediates the conversion of phylloquinone (PK) into MK-4, probably by cleaving the side chain of phylloquinone (PK) to release 2-methyl-1,4-naphthoquinone (menadione; K3) and then prenylating it with geranylgeranyl pyrophosphate (GGPP) to form MK-4. Also plays a role in cardiovascular development independently of MK-4 biosynthesis, by acting as a coenzyme Q10 biosynthetic enzyme: coenzyme Q10, also named ubiquinone, plays an important antioxidant role in the cardiovascular system. Mediates biosynthesis of coenzyme Q10 in the Golgi membrane, leading to protect cardiovascular tissues from NOS3/eNOS-dependent oxidative stress. This Rattus norvegicus (Rat) protein is UbiA prenyltransferase domain-containing protein 1 (Ubiad1).